Here is an 833-residue protein sequence, read N- to C-terminus: Urease (833 aa).

Positions 395 to 833 constitute a Urease domain; sequence GALDVHVHYI…LPLTRRYFVY (439 aa). 2 residues coordinate Ni(2+): H400 and H402. Residues H402 and A433 each contribute to the urea site. K483 contributes to the Ni(2+) binding site. Position 483 is an N6-carboxylysine (K483). Positions 485 and 512 each coordinate urea. 2 residues coordinate Ni(2+): H512 and H538. Residue H586 is the Proton donor of the active site. D626 is a binding site for Ni(2+). A629 contacts urea.

It in the C-terminal section; belongs to the metallo-dependent hydrolases superfamily. Urease alpha subunit family. Homohexamer. The cofactor is Ni(2+). In terms of processing, carboxylation allows a single lysine to coordinate two nickel ions.

It catalyses the reaction urea + 2 H2O + H(+) = hydrogencarbonate + 2 NH4(+). The protein operates within nitrogen metabolism; urea degradation; CO(2) and NH(3) from urea (urease route): step 1/1. Its activity is regulated as follows. The urease accessory proteins URE4, URE6 and URE7 are required for urease activity, URE7 supplying nickel for the functional urease. Functionally, plays a nutritional role via nitrogen acquisition in the environment. Contributes to the central nervous system invasion by enhancing yeast sequestration within microcapillary beds (such as within the brain) during hematogenous spread, thereby facilitating blood-to-brain invasion by C.neoformans. Affects fitness within the mammalian phagosome, promoting non-lytic exocytosis while delaying intracellular replication and thus reducing phagolysosomal membrane damage, events that could facilitate cryptococcal dissemination when transported inside macrophages. Urease activity is also associated with the regulation of key intracellular metabolic pathways, including melanin biosynthesis, polyamine biosynthesis, as well as intracellular levels of proline and reactive oxygen species. The protein is Urease of Cryptococcus neoformans var. grubii serotype A (strain H99 / ATCC 208821 / CBS 10515 / FGSC 9487) (Filobasidiella neoformans var. grubii).